The sequence spans 847 residues: Putative disease resistance RPP13-like protein 2 (847 aa).

The stretch at 26-42 forms a coiled coil; that stretch reads GVKDDLEELKTELTCIQ. The 305-residue stretch at 142–446 folds into the NB-ARC domain; the sequence is STSRVREVRR…AEGFIQEDEE (305 aa). ATP is bound at residue 191 to 198; that stretch reads GMEGLGKT. LRR repeat units follow at residues 587–610, 612–634, 703–726, 749–774, and 807–830; these read LVHLRYLGIADTVVNNLPDFISNL, FLQTLDASGNSFERMTDLSNLTS, LKNLRVLKIEVVSFSLFSEETVRF, FPSLESLTLVTNLQEDPMPTLQKLQR, and IKRLDELEIEEEAMPCLMKLNLDN.

Belongs to the disease resistance NB-LRR family. RPP13 subfamily.

In terms of biological role, potential disease resistance protein. This chain is Putative disease resistance RPP13-like protein 2 (RPP13L2), found in Arabidopsis thaliana (Mouse-ear cress).